The primary structure comprises 452 residues: Serine incorporator 2 (452 aa).

A run of 11 helical transmembrane segments spans residues 5–25 (LGAC…PCIL), 41–61 (FFTV…SPGV), 96–116 (AVYR…LLMV), 131–151 (GFWF…FYIP), 158–178 (IWFY…LLLL), 205–225 (LFFF…LLFV), 236–256 (GKVF…VAIL), 266–286 (SGLL…WLAL), 319–339 (WDAP…FISL), 387–407 (FFHL…TNWY), and 426–446 (ICAS…PLLL).

The protein belongs to the TDE1 family.

It is found in the cell membrane. The enzyme catalyses a 1,2-diacyl-sn-glycero-3-phospho-L-serine(in) = a 1,2-diacyl-sn-glycero-3-phospho-L-serine(out). It catalyses the reaction a 1,2-diacyl-sn-glycero-3-phosphocholine(in) = a 1,2-diacyl-sn-glycero-3-phosphocholine(out). The catalysed reaction is a 1,2-diacyl-sn-glycero-3-phosphoethanolamine(in) = a 1,2-diacyl-sn-glycero-3-phosphoethanolamine(out). Non-ATP-dependent, non-specific lipid transporter for phosphatidylserine, phosphatidylcholine, and phosphatidylethanolamine. Functions as a scramblase that flips lipids in both directions across the membrane. In contrast to SERINC3 and SERINC5, has no effect on gammaretrovirus particles infectivity. The protein is Serine incorporator 2 (SERINC2) of Bos taurus (Bovine).